Reading from the N-terminus, the 243-residue chain is Ribosomal RNA small subunit methyltransferase J (243 aa).

S-adenosyl-L-methionine-binding positions include 112-113 (ER) and aspartate 164.

Belongs to the methyltransferase superfamily. RsmJ family.

The protein localises to the cytoplasm. The enzyme catalyses guanosine(1516) in 16S rRNA + S-adenosyl-L-methionine = N(2)-methylguanosine(1516) in 16S rRNA + S-adenosyl-L-homocysteine + H(+). Specifically methylates the guanosine in position 1516 of 16S rRNA. This Legionella pneumophila (strain Lens) protein is Ribosomal RNA small subunit methyltransferase J.